Consider the following 405-residue polypeptide: Probable tRNA sulfurtransferase (405 aa).

The THUMP domain maps to 60–165; the sequence is VPVAESLKQI…EEAAYLSYEN (106 aa). ATP contacts are provided by residues 183–184, 208–209, arginine 265, glycine 287, and glutamine 296; these read ML and HF.

The protein belongs to the ThiI family.

The protein resides in the cytoplasm. The catalysed reaction is [ThiI sulfur-carrier protein]-S-sulfanyl-L-cysteine + a uridine in tRNA + 2 reduced [2Fe-2S]-[ferredoxin] + ATP + H(+) = [ThiI sulfur-carrier protein]-L-cysteine + a 4-thiouridine in tRNA + 2 oxidized [2Fe-2S]-[ferredoxin] + AMP + diphosphate. It carries out the reaction [ThiS sulfur-carrier protein]-C-terminal Gly-Gly-AMP + S-sulfanyl-L-cysteinyl-[cysteine desulfurase] + AH2 = [ThiS sulfur-carrier protein]-C-terminal-Gly-aminoethanethioate + L-cysteinyl-[cysteine desulfurase] + A + AMP + 2 H(+). The protein operates within cofactor biosynthesis; thiamine diphosphate biosynthesis. Its function is as follows. Catalyzes the ATP-dependent transfer of a sulfur to tRNA to produce 4-thiouridine in position 8 of tRNAs, which functions as a near-UV photosensor. Also catalyzes the transfer of sulfur to the sulfur carrier protein ThiS, forming ThiS-thiocarboxylate. This is a step in the synthesis of thiazole, in the thiamine biosynthesis pathway. The sulfur is donated as persulfide by IscS. This is Probable tRNA sulfurtransferase from Streptococcus mutans serotype c (strain ATCC 700610 / UA159).